The sequence spans 453 residues: uncharacterized protein (453 aa).

The [4Fe-4S] cluster site is built by cysteine 74, cysteine 80, cysteine 83, and cysteine 162. Glutamine 286, tyrosine 315, glutamate 336, and aspartate 384 together coordinate S-adenosyl-L-methionine. Cysteine 411 (nucleophile) is an active-site residue.

This sequence belongs to the class I-like SAM-binding methyltransferase superfamily. RNA M5U methyltransferase family.

This is an uncharacterized protein from Staphylococcus aureus (strain Mu50 / ATCC 700699).